Reading from the N-terminus, the 456-residue chain is Histidine--tRNA ligase (456 aa).

The protein belongs to the class-II aminoacyl-tRNA synthetase family. Homodimer.

The protein resides in the cytoplasm. It catalyses the reaction tRNA(His) + L-histidine + ATP = L-histidyl-tRNA(His) + AMP + diphosphate + H(+). In Borreliella afzelii (strain PKo) (Borrelia afzelii), this protein is Histidine--tRNA ligase.